The sequence spans 195 residues: Putative NADH dehydrogenase/NAD(P)H nitroreductase CC_0061 (195 aa).

The protein belongs to the nitroreductase family. HadB/RutE subfamily. FMN is required as a cofactor.

This Caulobacter vibrioides (strain ATCC 19089 / CIP 103742 / CB 15) (Caulobacter crescentus) protein is Putative NADH dehydrogenase/NAD(P)H nitroreductase CC_0061.